Consider the following 210-residue polypeptide: Chaperone protein TorD (210 aa).

It belongs to the TorD/DmsD family. TorD subfamily.

It is found in the cytoplasm. Functionally, involved in the biogenesis of TorA. Acts on TorA before the insertion of the molybdenum cofactor and, as a result, probably favors a conformation of the apoenzyme that is competent for acquiring the cofactor. The polypeptide is Chaperone protein TorD (Salmonella dublin (strain CT_02021853)).